Reading from the N-terminus, the 147-residue chain is Hemoglobin subunit epsilon-2 (147 aa).

In terms of domain architecture, Globin spans 3 to 147 (HFTTEENVAV…VANALTHKYH (145 aa)). The heme b site is built by tyrosine 64 and histidine 93.

The protein belongs to the globin family. In terms of tissue distribution, red blood cells.

Its function is as follows. Hemoglobin epsilon chain is a beta-type chain found in early embryos. The protein is Hemoglobin subunit epsilon-2 (HBE2) of Bos taurus (Bovine).